Here is a 223-residue protein sequence, read N- to C-terminus: Deoxyribose-phosphate aldolase (223 aa).

D91 (proton donor/acceptor) is an active-site residue. The Schiff-base intermediate with acetaldehyde role is filled by K153. The active-site Proton donor/acceptor is K182.

Belongs to the DeoC/FbaB aldolase family. DeoC type 1 subfamily.

Its subcellular location is the cytoplasm. It carries out the reaction 2-deoxy-D-ribose 5-phosphate = D-glyceraldehyde 3-phosphate + acetaldehyde. It participates in carbohydrate degradation; 2-deoxy-D-ribose 1-phosphate degradation; D-glyceraldehyde 3-phosphate and acetaldehyde from 2-deoxy-alpha-D-ribose 1-phosphate: step 2/2. Catalyzes a reversible aldol reaction between acetaldehyde and D-glyceraldehyde 3-phosphate to generate 2-deoxy-D-ribose 5-phosphate. In Streptococcus pyogenes serotype M28 (strain MGAS6180), this protein is Deoxyribose-phosphate aldolase.